A 486-amino-acid polypeptide reads, in one-letter code: Scarecrow-like protein 15 (486 aa).

The tract at residues 1–28 (MKIPASSPQDTTNNNNNTNSTDSNHLSM) is disordered. Over residues 10 to 24 (DTTNNNNNTNSTDSN) the composition is skewed to low complexity. In terms of domain architecture, GRAS spans 113-485 (DSVDNGGFDF…RALVATSAWR (373 aa)). A leucine repeat I (LRI) region spans residues 120 to 179 (FDFIEDLIRVVDCVESDELQLAQVVLSRLNQRLRSPAGRPLQRAAFYFKEALGSFLTGSN). Residues 198 to 266 (IKEYSGISPI…VSGGFLRVTA (69 aa)) are VHIID. The VHIID signature appears at 232 to 236 (VHVVD). The segment at 278–310 (LVKENLTQFAAEMKIRFQIEFVLMKTFEMLSFK) is leucine repeat II (LRII). The segment at 320-410 (TVVLISPAIF…AFVLRPKISA (91 aa)) is PFYRE. The tract at residues 413-485 (ETAADRRHTG…RALVATSAWR (73 aa)) is SAW.

The protein belongs to the GRAS family. As to expression, expressed in seedlings, roots, leaves and flowers.

The protein resides in the nucleus. In terms of biological role, probable transcription factor involved in plant development. The polypeptide is Scarecrow-like protein 15 (SCL15) (Arabidopsis thaliana (Mouse-ear cress)).